Reading from the N-terminus, the 68-residue chain is Glu S.griseus protease inhibitor (68 aa).

The residue at position 1 (Ser1) is an N-acetylserine. A disulfide bond links Cys3 and Cys48.

This sequence belongs to the protease inhibitor I13 (potato type I serine protease inhibitor) family.

Its function is as follows. Competitively inhibits Glu S.griseus protease by forming probably a 1:1 complex. BGIA has no inhibitory activity against 2 other acidic amino acid-specific endopeptidases (S.aureus protease V8 and B.subtilis proteinase), chymotrypsin, trypsin, pancreatic elastase, and papain, although subtilisin Carlsberg was strongly inhibited. The polypeptide is Glu S.griseus protease inhibitor (Momordica charantia (Bitter gourd)).